The chain runs to 510 residues: Solute carrier family 2, facilitated glucose transporter member 2 (510 aa).

The Cytoplasmic segment spans residues 1-10 (MTEDKVTGTL). Residues 11-31 (VLAVFTAVLSSFQFGYDIGVI) traverse the membrane as a helical segment. At 32–96 (NAPQQVIITH…SASLITMFWS (65 aa)) the chain is on the extracellular side. Asn62 carries an N-linked (GlcNAc...) asparagine glycan. Residues 97 to 117 (LSVSSFAVGGMIASFFGGLLG) traverse the membrane as a helical segment. Residues 118–122 (DKLGR) lie on the Cytoplasmic side of the membrane. The helical transmembrane segment at 123–143 (IKALLVANILSLVGALLMGFS) threads the bilayer. The Extracellular portion of the chain corresponds to 144-157 (KLGPSHILIISGRG). The helical transmembrane segment at 158 to 178 (ISGLYCGLISGLIPMYIGEIA) threads the bilayer. Topologically, residues 179–191 (PTTLRGAIGALHQ) are cytoplasmic. Gln191 provides a ligand contact to D-glucose. Residues 192 to 212 (LAIVTGILISQIVGLDFILGN) traverse the membrane as a helical segment. Over 213-215 (HEL) the chain is Extracellular. A helical membrane pass occupies residues 216–236 (WHILLGLSAVPAILQCLLLFF). Residues 237–301 (CPESPRYLYI…LFTNASYRQP (65 aa)) lie on the Cytoplasmic side of the membrane. A helical transmembrane segment spans residues 302–322 (ILVALMLHAAQQFSGINGIFY). D-glucose contacts are provided by residues 312-313 (QQ) and Asn318. The Extracellular portion of the chain corresponds to 323-336 (YSTSIFQTAGISQP). A helical membrane pass occupies residues 337–357 (VYATIGVGAVNTVFTAVSVFL). Asn347 is a D-glucose binding site. At 358 to 365 (VEKAGRRS) the chain is on the cytoplasmic side. The chain crosses the membrane as a helical span at residues 366-386 (LFLIGMSGMFVCAIFMSVGLV). Residues 387 to 400 (LLSKFPWMNYVSMT) are Extracellular-facing. The chain crosses the membrane as a helical span at residues 401 to 421 (AIFLFVSFFEIGPGPIPWFMV). Positions 410 and 418 each coordinate D-glucose. Residues 422–431 (AEFFSQGPRP) lie on the Cytoplasmic side of the membrane. The chain crosses the membrane as a helical span at residues 432–452 (AALAIAAFSNWTGNFIIALCF). The Extracellular portion of the chain corresponds to 453–454 (QY). Residues 455–475 (IADFCGPYVFFLLLVWSWPLF) form a helical membrane-spanning segment. Residues 476-510 (CSHFLKFQKPKENPLRKSQQSSERRGVQLKRQKLL) are Cytoplasmic-facing. The segment at 490–510 (LRKSQQSSERRGVQLKRQKLL) is disordered.

The protein belongs to the major facilitator superfamily. Sugar transporter (TC 2.A.1.1) family. Glucose transporter subfamily. In terms of processing, N-glycosylated; required for stability and retention at the cell surface of pancreatic beta cells.

It is found in the cell membrane. The catalysed reaction is D-glucose(out) = D-glucose(in). The enzyme catalyses D-fructose(out) = D-fructose(in). It catalyses the reaction L-dehydroascorbate(out) = L-dehydroascorbate(in). It carries out the reaction D-galactose(in) = D-galactose(out). D-glucose and maltose competitively inhibit fructose transport. D-glucose, D-fructose and maltose inhibit deoxyglucose transport. Its function is as follows. Facilitative hexose transporter that mediates the transport of glucose, fructose and galactose. Likely mediates the bidirectional transfer of glucose across the plasma membrane of hepatocytes and is responsible for uptake of glucose by the beta cells; may comprise part of the glucose-sensing mechanism of the beta cell. May also participate with the Na(+)/glucose cotransporter in the transcellular transport of glucose in the small intestine and kidney. Also able to mediate the transport of dehydroascorbate. The protein is Solute carrier family 2, facilitated glucose transporter member 2 of Bos taurus (Bovine).